Reading from the N-terminus, the 637-residue chain is Chaperone protein HtpG (637 aa).

The interval 1 to 345 (MSQQETHGFQ…SNDLPLNVSR (345 aa)) is a; substrate-binding. The tract at residues 346-562 (EILQDNHVTK…DGEMSTQMIK (217 aa)) is b. The tract at residues 563 to 637 (LMQAAGQPVP…MNQMLLANMK (75 aa)) is c.

This sequence belongs to the heat shock protein 90 family. In terms of assembly, homodimer.

Its subcellular location is the cytoplasm. Molecular chaperone. Has ATPase activity. The chain is Chaperone protein HtpG from Shewanella baltica (strain OS155 / ATCC BAA-1091).